Consider the following 174-residue polypeptide: Peptide deformylase (174 aa).

Fe cation contacts are provided by Cys-96 and His-138. The active site involves Glu-139. His-142 is a binding site for Fe cation.

The protein belongs to the polypeptide deformylase family. It depends on Fe(2+) as a cofactor.

It carries out the reaction N-terminal N-formyl-L-methionyl-[peptide] + H2O = N-terminal L-methionyl-[peptide] + formate. Its function is as follows. Removes the formyl group from the N-terminal Met of newly synthesized proteins. Requires at least a dipeptide for an efficient rate of reaction. N-terminal L-methionine is a prerequisite for activity but the enzyme has broad specificity at other positions. The protein is Peptide deformylase of Helicobacter pylori (strain P12).